A 319-amino-acid chain; its full sequence is BTB/POZ domain-containing adapter for CUL3-mediated RhoA degradation protein 2 (319 aa).

The BTB domain occupies 31-99 (KYIRLNVGGC…LRDDTITLPK (69 aa)).

The protein belongs to the BACURD family. In terms of assembly, component of the BCR(TNFAIP1) E3 ubiquitin ligase complex, at least composed of cul3, tnfaip1/bacurd2 and rbx1.

The protein resides in the cytoplasm. Its subcellular location is the nucleus. It is found in the endosome. It participates in protein modification; protein ubiquitination. Functionally, substrate-specific adapter of a BCR (BTB-CUL3-RBX1) E3 ubiquitin-protein ligase complex involved in regulation of cytoskeleton structure. The BCR(TNFAIP1) E3 ubiquitin ligase complex mediates the ubiquitination of target proteins, leading to their degradation by the proteasome. The chain is BTB/POZ domain-containing adapter for CUL3-mediated RhoA degradation protein 2 (tnfaip1) from Xenopus tropicalis (Western clawed frog).